The following is a 606-amino-acid chain: RUN and FYVE domain-containing protein 2 (606 aa).

The region spanning 37-169 is the RUN domain; that stretch reads DSDYPPLQQF…IDANLCVKGE (133 aa). The stretch at 210–534 forms a coiled coil; it reads EELNRQLNST…IKEANKALQG (325 aa). An FYVE-type zinc finger spans residues 540–598; sequence DKEATHCKLCEKEFSLSKRKHHCRNCGEIFCNACSDNELPLPSSPKPVRVCDSCHALLI. Positions 546, 549, 562, 565, 570, 573, 590, and 593 each coordinate Zn(2+).

Interacts with BMX.

It is found in the nucleus. In Pongo abelii (Sumatran orangutan), this protein is RUN and FYVE domain-containing protein 2 (RUFY2).